We begin with the raw amino-acid sequence, 458 residues long: ATP synthase subunit beta (458 aa).

ATP is bound at residue 148–155 (GGAGVGKT).

This sequence belongs to the ATPase alpha/beta chains family. As to quaternary structure, F-type ATPases have 2 components, CF(1) - the catalytic core - and CF(0) - the membrane proton channel. CF(1) has five subunits: alpha(3), beta(3), gamma(1), delta(1), epsilon(1). CF(0) has three main subunits: a(1), b(2) and c(9-12). The alpha and beta chains form an alternating ring which encloses part of the gamma chain. CF(1) is attached to CF(0) by a central stalk formed by the gamma and epsilon chains, while a peripheral stalk is formed by the delta and b chains.

Its subcellular location is the cell inner membrane. The enzyme catalyses ATP + H2O + 4 H(+)(in) = ADP + phosphate + 5 H(+)(out). Functionally, produces ATP from ADP in the presence of a proton gradient across the membrane. The catalytic sites are hosted primarily by the beta subunits. In Mannheimia succiniciproducens (strain KCTC 0769BP / MBEL55E), this protein is ATP synthase subunit beta.